We begin with the raw amino-acid sequence, 211 residues long: Transcription factor E (211 aa).

The region spanning 10–130 (GNPAIYQYLL…LWLMRMDHMN (121 aa)) is the HTH TFE/IIEalpha-type domain.

Belongs to the TFE family. Monomer. Interaction with RNA polymerase subunits RpoF and RpoE is necessary for Tfe stimulatory transcription activity. Able to interact with Tbp and RNA polymerase in the absence of DNA promoter. Interacts both with the preinitiation and elongation complexes.

Its function is as follows. Transcription factor that plays a role in the activation of archaeal genes transcribed by RNA polymerase. Facilitates transcription initiation by enhancing TATA-box recognition by TATA-box-binding protein (Tbp), and transcription factor B (Tfb) and RNA polymerase recruitment. Not absolutely required for transcription in vitro, but particularly important in cases where Tbp or Tfb function is not optimal. It dynamically alters the nucleic acid-binding properties of RNA polymerases by stabilizing the initiation complex and destabilizing elongation complexes. Seems to translocate with the RNA polymerase following initiation and acts by binding to the non template strand of the transcription bubble in elongation complexes. The protein is Transcription factor E of Methanocorpusculum labreanum (strain ATCC 43576 / DSM 4855 / Z).